A 261-amino-acid polypeptide reads, in one-letter code: Ubiquinone biosynthesis O-methyltransferase (261 aa).

A disordered region spans residues 1 to 22 (MTMQVDPSANSSAASSAAPGTT). Residues 8-18 (SANSSAASSAA) are compositionally biased toward low complexity. S-adenosyl-L-methionine-binding residues include R55, G86, D107, and M149.

Belongs to the methyltransferase superfamily. UbiG/COQ3 family.

The catalysed reaction is a 3-demethylubiquinol + S-adenosyl-L-methionine = a ubiquinol + S-adenosyl-L-homocysteine + H(+). It catalyses the reaction a 3-(all-trans-polyprenyl)benzene-1,2-diol + S-adenosyl-L-methionine = a 2-methoxy-6-(all-trans-polyprenyl)phenol + S-adenosyl-L-homocysteine + H(+). Its pathway is cofactor biosynthesis; ubiquinone biosynthesis. Functionally, O-methyltransferase that catalyzes the 2 O-methylation steps in the ubiquinone biosynthetic pathway. This chain is Ubiquinone biosynthesis O-methyltransferase, found in Nitrobacter winogradskyi (strain ATCC 25391 / DSM 10237 / CIP 104748 / NCIMB 11846 / Nb-255).